Reading from the N-terminus, the 626-residue chain is Forkhead box protein O1 (626 aa).

Residues 1–11 (MAEAPLPPPPG) show a composition bias toward pro residues. 4 disordered regions span residues 1–57 (MAEA…PAAG), 90–142 (DIRQ…SRRN), 218–319 (SSWW…MPEQ), and 484–519 (PTYGSQPTHNKMSSHPHSHQPPPNHPSVNGRTMTHN). 2 stretches are compositionally biased toward low complexity: residues 37 to 48 (NPSSSANSSPAP) and 101 to 133 (QHPQQQAGTLCAPSVPSALSPASSPSPLGAQQP). Residues 144 to 238 (WGNLSYADLI…KNGKSPRRRA (95 aa)) constitute a DNA-binding region (fork-head). The span at 248 to 259 (AKSRGRAAKKKA) shows a compositional bias: basic residues. Positions 262 to 277 (QSSQDGSSDSPGSQFS) are enriched in low complexity. Composition is skewed to polar residues over residues 298–310 (RPRTSSNASTISG) and 484–494 (PTYGSQPTHNK).

Phosphorylated by AKT1; insulin-induced. In terms of processing, IGF1 rapidly induces phosphorylation of Thr-28, Ser-240 and Ser-303. Phosphorylation of Ser-240 decreases DNA-binding activity and promotes the phosphorylation of Thr-28, and Ser-303, which leads to nuclear exclusion and loss of function. Phosphorylation of Ser-313 is independent of IGF1 and leads to reduced function.

It is found in the cytoplasm. The protein localises to the nucleus. Functionally, transcription factor that regulates metabolic homeostasis in response to oxidative stress. Binds to the consensus sequence 5'-TT[G/A]TTTTG-3' and the related Daf-16 family binding element (DBE) with consensus sequence 5'-TT[G/A]TTTAC-3'. Main regulator of redox balance and osteoblast numbers and controls bone mass. Orchestrates the endocrine function of the skeleton in regulating glucose metabolism. Also acts as a key regulator of chondrogenic commitment of skeletal progenitor cells in response to lipid availability: when lipids levels are low, translocates to the nucleus and promotes expression of sox9, which induces chondrogenic commitment and suppresses fatty acid oxidation. Acts synergistically with atf4 to suppress osteocalcin/bglap activity, increasing glucose levels and triggering glucose intolerance and insulin insensitivity. Also suppresses the transcriptional activity of runx2, an upstream activator of osteocalcin/bglap. May act as a positive regulator of apoptosis in cardiac smooth muscle cells as a result of its transcriptional activation of pro-apoptotic genes. This Xenopus tropicalis (Western clawed frog) protein is Forkhead box protein O1.